Consider the following 442-residue polypeptide: tRNA modification GTPase MnmE (442 aa).

Positions 22, 79, and 118 each coordinate (6S)-5-formyl-5,6,7,8-tetrahydrofolate. In terms of domain architecture, TrmE-type G spans 215-365 (EIPIAIVGRP…LEKAILFEYQ (151 aa)). Asn225 contacts K(+). GTP is bound by residues 225–230 (NVGKSS), 244–250 (TNIEGTT), and 269–272 (DTAG). A Mg(2+)-binding site is contributed by Ser229. K(+) contacts are provided by Thr244, Ile246, and Thr249. Thr250 contributes to the Mg(2+) binding site. Residue Lys442 participates in (6S)-5-formyl-5,6,7,8-tetrahydrofolate binding.

This sequence belongs to the TRAFAC class TrmE-Era-EngA-EngB-Septin-like GTPase superfamily. TrmE GTPase family. As to quaternary structure, homodimer. Heterotetramer of two MnmE and two MnmG subunits. The cofactor is K(+).

Its subcellular location is the cytoplasm. Functionally, exhibits a very high intrinsic GTPase hydrolysis rate. Involved in the addition of a carboxymethylaminomethyl (cmnm) group at the wobble position (U34) of certain tRNAs, forming tRNA-cmnm(5)s(2)U34. This chain is tRNA modification GTPase MnmE, found in Mycoplasmopsis pulmonis (strain UAB CTIP) (Mycoplasma pulmonis).